The following is a 452-amino-acid chain: COP9 signalosome complex subunit 11 (452 aa).

The PCI domain occupies 205–374 (FYIEDPKTMM…ISYSKRSIVD (170 aa)).

Component of a COP9 signalosome-like (CSN) complex.

Its subcellular location is the cytoplasm. It localises to the nucleus. Functionally, component of the COP9 signalosome (CSN) complex that acts as an regulator of the ubiquitin (Ubl) conjugation pathway by mediating the deneddylation of the cullin subunit of SCF-type E3 ubiquitin-protein ligase complexes The CSN complex is involved in the regulation of the mating pheromone response. PCI8 may also be involved in transcriptional and translational control. The sequence is that of COP9 signalosome complex subunit 11 (PCI8) from Candida glabrata (strain ATCC 2001 / BCRC 20586 / JCM 3761 / NBRC 0622 / NRRL Y-65 / CBS 138) (Yeast).